A 311-amino-acid chain; its full sequence is DNA repair and recombination protein RadA (311 aa).

104-111 (GEFGSGKS) is an ATP binding site.

The protein belongs to the eukaryotic RecA-like protein family.

Functionally, involved in DNA repair and in homologous recombination. Binds and assemble on single-stranded DNA to form a nucleoprotein filament. Hydrolyzes ATP in a ssDNA-dependent manner and promotes DNA strand exchange between homologous DNA molecules. In Methanosphaera stadtmanae (strain ATCC 43021 / DSM 3091 / JCM 11832 / MCB-3), this protein is DNA repair and recombination protein RadA.